The primary structure comprises 362 residues: Probable cinnamyl alcohol dehydrogenase 8D (362 aa).

Cysteine 45 provides a ligand contact to Zn(2+). An NADP(+)-binding site is contributed by threonine 47. Zn(2+) contacts are provided by histidine 67, glutamate 68, cysteine 98, cysteine 101, cysteine 104, cysteine 112, and cysteine 161. NADP(+) contacts are provided by residues threonine 165, 186–191, 209–214, threonine 249, glycine 273, and 296–298; these read GLGGLG, SSSPAK, and NGV.

This sequence belongs to the zinc-containing alcohol dehydrogenase family. As to quaternary structure, homodimer. Requires Zn(2+) as cofactor.

The enzyme catalyses (E)-cinnamyl alcohol + NADP(+) = (E)-cinnamaldehyde + NADPH + H(+). It catalyses the reaction (E)-coniferol + NADP(+) = (E)-coniferaldehyde + NADPH + H(+). The catalysed reaction is (E)-sinapyl alcohol + NADP(+) = (E)-sinapaldehyde + NADPH + H(+). It carries out the reaction (E)-4-coumaroyl alcohol + NADP(+) = (E)-4-coumaraldehyde + NADPH + H(+). The enzyme catalyses (E)-caffeyl alcohol + NADP(+) = (E)-caffeyl aldehyde + NADPH + H(+). Its pathway is aromatic compound metabolism; phenylpropanoid biosynthesis. Involved in lignin biosynthesis. Catalyzes the final step specific for the production of lignin monomers. Catalyzes the NADPH-dependent reduction of coniferaldehyde, 5-hydroxyconiferaldehyde, sinapaldehyde, 4-coumaraldehyde and caffeyl aldehyde to their respective alcohols. The chain is Probable cinnamyl alcohol dehydrogenase 8D from Oryza sativa subsp. japonica (Rice).